A 629-amino-acid polypeptide reads, in one-letter code: MHFHERFDVIVVGGGHAGTEAALAAARMGSKTLLLTHNLDTLGQMSCNPAIGGIGKGHLVKEIDALGGAMAIATDYAGIQFRTLNSSKGPAVRATRAQADRALYRQKIQNILQNQANLRIFQQAVDDIVVENDHVVGVVTQMGLAFEASAVVLTAGTFLSGKIHIGLENYSGGRAGDPPSIALAHRLRELPIRVGRLKTGTPPRIDANTIDFSQMTEQKGDTPLPVMSFMGDVSHHPKQISCWITHTNEKTHDIIRGGLDRSPMYSGVIEGIGPRYCPSIEDKIHRFSDKSSHQIFIEPEGLTTNEIYPNGISTSLPFDVQLNLVRSIKGMENAEIVRPGYAIEYDYFDPRDLKNSLETKTINGLFFAGQINGTTGYEEAGAQGLLAGMNASLQVQGKEAWCPRRDEAYIGVLVDDLSTLGTKEPYRMFTSRAEYRLLLREDNADLRLTAKGRELGLVDDARWAAFSEKMESIELELQRLRSQWIHPNSPLVPVLNPHLNTPISREASFEELLRRPEMDYNKLMQIEGFGPGLADPLAAEQVQIQVKYSGYIQRQQEEINKAVRNENTGLPLNLDYKEVPGLSNEVIAKLNSHKPETIGQASRISGITPAAISILLVHLKKRGLLRKSA.

FAD-binding positions include 13–18 (GGGHAG), Val125, and Ser180. 273-287 (GPRYCPSIEDKIHRF) contributes to the NAD(+) binding site. Gln370 contributes to the FAD binding site.

This sequence belongs to the MnmG family. In terms of assembly, homodimer. Heterotetramer of two MnmE and two MnmG subunits. It depends on FAD as a cofactor.

The protein resides in the cytoplasm. Its function is as follows. NAD-binding protein involved in the addition of a carboxymethylaminomethyl (cmnm) group at the wobble position (U34) of certain tRNAs, forming tRNA-cmnm(5)s(2)U34. The chain is tRNA uridine 5-carboxymethylaminomethyl modification enzyme MnmG from Shewanella oneidensis (strain ATCC 700550 / JCM 31522 / CIP 106686 / LMG 19005 / NCIMB 14063 / MR-1).